The sequence spans 432 residues: MDEAAGDLKQALPNTCDNVQIHVEVHQKSNSTAKKEDIRMSVLKLLNRHNIVFGDYKWTEFDDGFLNSNVQSVSIVDTELKLKERQPIDLSKSSLTIHIFHLNEEGPSIENLEEENEDIVAANHWVLPAAEFHGLWESLIYDTEVKSHLLDYVTTTLLFSDRNVDSNLISWNRVVLLHGPPGTGKTSLCKALAQKLTIRLSYRYRYGQLIEINSHSLFSKWFSESGKLVTKMFQKIQELIDDKDALVFVLIDEVESLTAARSAFKAGTEPSDAIRVVNAVLMQIDQIKRYPNVVILTTSNITEKIDMAFVDRADIKQYIGPPSAAAIFRIYLSCLEELMKCQIIYPRQHLLSLRELEMIGFVENNVSRLSLVLKEISRRSEGLSGRVLRKLPFLAHALYIQSPSVTMTAFLQALSLVVDKQFEERKKLADCV.

ATP is bound at residue 179 to 186 (GPPGTGKT).

It belongs to the AAA ATPase family. PCH2 subfamily.

Plays a key role in chromosome recombination and chromosome structure development during meiosis. Required at early steps in meiotic recombination that leads to non-crossovers pathways. Also needed for efficient completion of homologous synapsis by influencing crossover distribution along the chromosomes affecting both crossovers and non-crossovers pathways. The polypeptide is Pachytene checkpoint protein 2 homolog (TRIP13) (Gallus gallus (Chicken)).